We begin with the raw amino-acid sequence, 456 residues long: MAKRRERRGRRQHRSHRRIQRIIDGADFINYMPDDILHHILSFIPTDLAMRTSVLSRRWRHVWCETPCLDITLKHGAMNQTLTSYTAPIITSFKLVMDLNSNTVPQVDSWIEFALSRNVQNLSVFVRDFTYSKTYRFPDIFYLSSSLKLLDVTLDFFDMIPTCTVSWKSLRNLTLRFCQIPDESIHNILSGCPILESLTLDTCRLLERLDLSKSPNLRRLDINQQYRRTGPVAIVAPHIYYLRLTYSSTPSTIVDVSSLSEANLTIISSLLSPLTADGYQTMALEMLSKFHNVKRLTVGETLLQILSLAELRGVPFPTLKVQTLTVKTEFVRSVIPGISRLLQNSPGLKKLRPSTMKMHHLKGLYPDQCWRSTCEVFPTSKEIYKMLGCNDATLKLVASFMDLVLRNAKTLERMVVWLGGIYFNGDAPWFEEELFDMVETLSRNNNVSILLKQSNC.

One can recognise an F-box domain in the interval 26–72; it reads ADFINYMPDDILHHILSFIPTDLAMRTSVLSRRWRHVWCETPCLDIT. 5 LRR repeats span residues 126–154, 177–202, 206–224, 271–300, and 330–355; these read VRDF…DVTL, FCQI…TLDT, LERL…DINQ, LSPL…TVGE, and FVRS…RPST.

This is Putative F-box/LRR-repeat protein At5g02700 from Arabidopsis thaliana (Mouse-ear cress).